Consider the following 243-residue polypeptide: 1-(5-phosphoribosyl)-5-[(5-phosphoribosylamino)methylideneamino] imidazole-4-carboxamide isomerase (243 aa).

The active-site Proton acceptor is Asp8. Residue Asp129 is the Proton donor of the active site.

The protein belongs to the HisA/HisF family.

The protein localises to the cytoplasm. It carries out the reaction 1-(5-phospho-beta-D-ribosyl)-5-[(5-phospho-beta-D-ribosylamino)methylideneamino]imidazole-4-carboxamide = 5-[(5-phospho-1-deoxy-D-ribulos-1-ylimino)methylamino]-1-(5-phospho-beta-D-ribosyl)imidazole-4-carboxamide. Its pathway is amino-acid biosynthesis; L-histidine biosynthesis; L-histidine from 5-phospho-alpha-D-ribose 1-diphosphate: step 4/9. In Nitratidesulfovibrio vulgaris (strain DSM 19637 / Miyazaki F) (Desulfovibrio vulgaris), this protein is 1-(5-phosphoribosyl)-5-[(5-phosphoribosylamino)methylideneamino] imidazole-4-carboxamide isomerase.